Here is a 257-residue protein sequence, read N- to C-terminus: Hydroxyacylglutathione hydrolase (257 aa).

Residues histidine 54, histidine 56, aspartate 58, histidine 59, histidine 113, aspartate 137, and histidine 175 each contribute to the Zn(2+) site.

This sequence belongs to the metallo-beta-lactamase superfamily. Glyoxalase II family. As to quaternary structure, monomer. Zn(2+) serves as cofactor.

It catalyses the reaction an S-(2-hydroxyacyl)glutathione + H2O = a 2-hydroxy carboxylate + glutathione + H(+). It participates in secondary metabolite metabolism; methylglyoxal degradation; (R)-lactate from methylglyoxal: step 2/2. In terms of biological role, thiolesterase that catalyzes the hydrolysis of S-D-lactoyl-glutathione to form glutathione and D-lactic acid. In Trichodesmium erythraeum (strain IMS101), this protein is Hydroxyacylglutathione hydrolase.